We begin with the raw amino-acid sequence, 257 residues long: 3-deoxy-manno-octulosonate cytidylyltransferase (257 aa).

Belongs to the KdsB family.

The protein resides in the cytoplasm. The catalysed reaction is 3-deoxy-alpha-D-manno-oct-2-ulosonate + CTP = CMP-3-deoxy-beta-D-manno-octulosonate + diphosphate. It functions in the pathway nucleotide-sugar biosynthesis; CMP-3-deoxy-D-manno-octulosonate biosynthesis; CMP-3-deoxy-D-manno-octulosonate from 3-deoxy-D-manno-octulosonate and CTP: step 1/1. The protein operates within bacterial outer membrane biogenesis; lipopolysaccharide biosynthesis. Activates KDO (a required 8-carbon sugar) for incorporation into bacterial lipopolysaccharide in Gram-negative bacteria. The protein is 3-deoxy-manno-octulosonate cytidylyltransferase of Albidiferax ferrireducens (strain ATCC BAA-621 / DSM 15236 / T118) (Rhodoferax ferrireducens).